A 122-amino-acid chain; its full sequence is Small ribosomal subunit protein uS13 (122 aa).

Residues 97-122 are disordered; that stretch reads PVRGQRTKTNARTRKGPARTVAGKKK.

The protein belongs to the universal ribosomal protein uS13 family. As to quaternary structure, part of the 30S ribosomal subunit. Forms a loose heterodimer with protein S19. Forms two bridges to the 50S subunit in the 70S ribosome.

In terms of biological role, located at the top of the head of the 30S subunit, it contacts several helices of the 16S rRNA. In the 70S ribosome it contacts the 23S rRNA (bridge B1a) and protein L5 of the 50S subunit (bridge B1b), connecting the 2 subunits; these bridges are implicated in subunit movement. Contacts the tRNAs in the A and P-sites. The sequence is that of Small ribosomal subunit protein uS13 from Geobacter metallireducens (strain ATCC 53774 / DSM 7210 / GS-15).